The sequence spans 81 residues: Protein Vpu (81 aa).

The Extracellular portion of the chain corresponds to 1–7 (MSILQIV). Residues 8–28 (AIVAIIVALILAIVVWTIVYI) traverse the membrane as a helical segment. At 29 to 81 (EYKRLLRQRKIDWLIDRIRERAEDSGNESEGDTEELSTLVEMEPDNFRNDNDM) the chain is on the cytoplasmic side. The disordered stretch occupies residues 50–81 (AEDSGNESEGDTEELSTLVEMEPDNFRNDNDM). Phosphoserine; by host CK2 is present on residues serine 53 and serine 57. Residues 53 to 63 (SGNESEGDTEE) are compositionally biased toward acidic residues.

This sequence belongs to the HIV-1 VPU protein family. As to quaternary structure, homopentamer. Interacts with host CD4 and BRTC; these interactions induce proteasomal degradation of CD4. Interacts with host BST2; this interaction leads to the degradation of host BST2. Interacts with host FBXW11. Interacts with host AP1M1; this interaction plays a role in the mistrafficking and subsequent degradation of host BST2. Interacts with host RANBP2; this interaction allows Vpu to down-regulate host BLM sumoylation. Phosphorylated by host CK2. This phosphorylation is necessary for interaction with human BTRC and degradation of CD4.

It localises to the host membrane. Ion channel activity is inhibited by hexamethylene amiloride in vitro. In terms of biological role, enhances virion budding by targeting host CD4 and Tetherin/BST2 to proteasome degradation. Degradation of CD4 prevents any unwanted premature interactions between viral Env and its host receptor CD4 in the endoplasmic reticulum. Degradation of antiretroviral protein Tetherin/BST2 is important for virion budding, as BST2 tethers new viral particles to the host cell membrane. Mechanistically, Vpu bridges either CD4 or BST2 to BTRC, a substrate recognition subunit of the Skp1/Cullin/F-box protein E3 ubiquitin ligase, induces their ubiquitination and subsequent proteasomal degradation. The alteration of the E3 ligase specificity by Vpu seems to promote the degradation of host IKBKB, leading to NF-kappa-B down-regulation and subsequent apoptosis. Acts as a viroporin that forms an oligomeric ion channel in membranes. Modulates the host DNA repair mechanisms to promote degradation of nuclear viral cDNA in cells that are already productively infected in order to suppress immune sensing and proviral hyper-integration (superinfection). Manipulates PML-NBs and modulates SUMOylation of host BLM protein thereby enhancing its DNA-end processing activity toward viral unintegrated linear DNA. Also inhibits RAD52-mediated homologous repair of viral cDNA, preventing the generation of dead-end circular forms of single copies of the long terminal repeat and permitting sustained nucleolytic attack. The sequence is that of Protein Vpu from Human immunodeficiency virus type 1 (HIV-1).